Reading from the N-terminus, the 1592-residue chain is Probable serine/threonine-protein kinase DDB_G0293958 (1592 aa).

The Protein kinase 1 domain occupies M1–I302. ATP-binding positions include T2–K10 and K43. Catalysis depends on D158, which acts as the Proton acceptor. Disordered stretches follow at residues I348–N402, F455–N526, and K837–S867. Low complexity predominate over residues N349–N402. The stretch at S461–N518 forms a coiled coil. Positions Q486–E496 are enriched in basic and acidic residues. Low complexity-rich tracts occupy residues N499–N526 and K837–N864. Residues L1342–L1592 form the Protein kinase 2 domain. Residues I1348–I1356 and K1376 each bind ATP. D1474 (proton acceptor) is an active-site residue.

This sequence belongs to the protein kinase superfamily. Ser/Thr protein kinase family.

The catalysed reaction is L-seryl-[protein] + ATP = O-phospho-L-seryl-[protein] + ADP + H(+). It catalyses the reaction L-threonyl-[protein] + ATP = O-phospho-L-threonyl-[protein] + ADP + H(+). This Dictyostelium discoideum (Social amoeba) protein is Probable serine/threonine-protein kinase DDB_G0293958.